Here is a 224-residue protein sequence, read N- to C-terminus: Haloacetate dehalogenase H-2 (224 aa).

Asp-10 serves as the catalytic Nucleophile.

It belongs to the HAD-like hydrolase superfamily. S-2-haloalkanoic acid dehalogenase family.

The catalysed reaction is a haloacetate + H2O = a halide anion + glycolate + H(+). The protein is Haloacetate dehalogenase H-2 (dehH2) of Moraxella sp. (strain B).